Here is a 572-residue protein sequence, read N- to C-terminus: Proline--tRNA ligase (572 aa).

This sequence belongs to the class-II aminoacyl-tRNA synthetase family. ProS type 1 subfamily. In terms of assembly, homodimer.

It localises to the cytoplasm. The catalysed reaction is tRNA(Pro) + L-proline + ATP = L-prolyl-tRNA(Pro) + AMP + diphosphate. Functionally, catalyzes the attachment of proline to tRNA(Pro) in a two-step reaction: proline is first activated by ATP to form Pro-AMP and then transferred to the acceptor end of tRNA(Pro). As ProRS can inadvertently accommodate and process non-cognate amino acids such as alanine and cysteine, to avoid such errors it has two additional distinct editing activities against alanine. One activity is designated as 'pretransfer' editing and involves the tRNA(Pro)-independent hydrolysis of activated Ala-AMP. The other activity is designated 'posttransfer' editing and involves deacylation of mischarged Ala-tRNA(Pro). The misacylated Cys-tRNA(Pro) is not edited by ProRS. This chain is Proline--tRNA ligase, found in Escherichia coli (strain K12 / MC4100 / BW2952).